A 365-amino-acid polypeptide reads, in one-letter code: Fatty acid hydroxylase vlmA (365 aa).

Residues 20–41 form a disordered region; that stretch reads TTIKRRQNDKTKTPKTKPVSKI. Asn-47 carries an N-linked (GlcNAc...) asparagine glycan. 4 helical membrane passes run 62–82, 89–109, 144–164, and 179–199; these read ILLQSLLPITVHQLTTLVLSI, VHPFLLRLCVIIGYGYAFRFL, LNWSLPLTVGSRTVMCVLVAY, and WWAWLAVYLSLYPIILDFYYY. The region spanning 189–335 is the Fatty acid hydroxylase domain; it reads LYPIILDFYY…TRIWDRLFGT (147 aa).

Belongs to the sterol desaturase family. TMEM195 subfamily.

It localises to the membrane. Its pathway is secondary metabolite biosynthesis. Its function is as follows. Fatty acid hydroxylase; part of the gene cluster that mediates the biosynthesis of verlamelin, a lipopeptide that exhibits antifungal activity against plant pathogenic fungi. Verlamelin is a cyclic hexadepsipeptide and is bridged by ester bonding between a 5-hydroxytetradecanoic acid moiety and a carboxyl group on the terminal Val of amide-bonded tetradecanoyl-hexapeptide D-allo-Thr-D-Ala-L-Pro-L-Gln-D-Tyr-L-Val. VlmA and vlmB are altogether regarded as essential components in the biosynthesis of 5-hydroxytetradecanoic acid. VlmA catalyzes the hydroxylation at position C5 of tetradecanoic acid produced in primary metabolism, while the precise function of vlmB still remains to be solved. To be loaded onto the waiting NRPS, 5-hydroxytetradecanoic acid is activated in the form of acyladenylate by the AMP-dependent ligase vlmC. VlmS seems to accept the fatty-acyl intermediate onto the initial module to further elongate amino acid residues by the downstream modules. In addition, in the last module at its C-terminus, vlmS contains a surplus condensation (C) domain that may be involved in cyclization, the last step to form verlamelin. In Lecanicillium sp, this protein is Fatty acid hydroxylase vlmA.